Reading from the N-terminus, the 732-residue chain is Polyribonucleotide nucleotidyltransferase (732 aa).

The Mg(2+) site is built by aspartate 489 and aspartate 495. The region spanning 556-615 (PKIDTIQIDVDKIKIVIGKGGETIDKIIAETGVKIDIDEEGLVQIFSSDQAAIDRTKEII) is the KH domain. The S1 motif domain occupies 625 to 693 (GEVYHAKVVR…DKGRVDASMK (69 aa)). The tract at residues 691-732 (SMKALIPRPPKPEKKEEKASEAKEASNDQASKSQSETASEEK) is disordered. A compositionally biased stretch (basic and acidic residues) spans 700 to 716 (PKPEKKEEKASEAKEAS). Positions 717–732 (NDQASKSQSETASEEK) are enriched in polar residues.

It belongs to the polyribonucleotide nucleotidyltransferase family. It depends on Mg(2+) as a cofactor.

It is found in the cytoplasm. It catalyses the reaction RNA(n+1) + phosphate = RNA(n) + a ribonucleoside 5'-diphosphate. Functionally, involved in mRNA degradation. Catalyzes the phosphorolysis of single-stranded polyribonucleotides processively in the 3'- to 5'-direction. This Streptococcus uberis (strain ATCC BAA-854 / 0140J) protein is Polyribonucleotide nucleotidyltransferase.